A 300-amino-acid chain; its full sequence is Ribokinase (300 aa).

Substrate-binding positions include 11–13, 39–43, and glutamate 139; these read SMD and GKGAN. Residues asparagine 183 and 210–215 each bind ATP; that span reads TLGSEG. Residues aspartate 236 and threonine 238 each coordinate K(+). An ATP-binding site is contributed by 241–242; it reads GD. Aspartate 242 contacts substrate. Aspartate 242 serves as the catalytic Proton acceptor. The K(+) site is built by serine 272, lysine 275, and glycine 277.

The protein belongs to the carbohydrate kinase PfkB family. Ribokinase subfamily. Homodimer. Mg(2+) serves as cofactor.

It is found in the cytoplasm. It catalyses the reaction D-ribose + ATP = D-ribose 5-phosphate + ADP + H(+). It participates in carbohydrate metabolism; D-ribose degradation; D-ribose 5-phosphate from beta-D-ribopyranose: step 2/2. Activated by a monovalent cation that binds near, but not in, the active site. The most likely occupant of the site in vivo is potassium. Ion binding induces a conformational change that may alter substrate affinity. Catalyzes the phosphorylation of ribose at O-5 in a reaction requiring ATP and magnesium. The resulting D-ribose-5-phosphate can then be used either for sythesis of nucleotides, histidine, and tryptophan, or as a component of the pentose phosphate pathway. This chain is Ribokinase, found in Lactococcus lactis subsp. lactis (strain IL1403) (Streptococcus lactis).